The following is a 107-amino-acid chain: Thioredoxin (107 aa).

One can recognise a Thioredoxin domain in the interval 2–107 (PSPIQVTDFS…TLTNALKKYL (106 aa)). Catalysis depends on nucleophile residues cysteine 32 and cysteine 35. Cysteine 32 and cysteine 35 form a disulfide bridge.

Belongs to the thioredoxin family.

It localises to the plastid. The protein localises to the chloroplast. Participates in various redox reactions through the reversible oxidation of its active center dithiol to a disulfide and catalyzes dithiol-disulfide exchange reactions. The chain is Thioredoxin (trxA) from Cyanidium caldarium (Red alga).